Consider the following 316-residue polypeptide: GTP cyclohydrolase FolE2 2 (316 aa).

The protein belongs to the GTP cyclohydrolase IV family.

The catalysed reaction is GTP + H2O = 7,8-dihydroneopterin 3'-triphosphate + formate + H(+). It functions in the pathway cofactor biosynthesis; 7,8-dihydroneopterin triphosphate biosynthesis; 7,8-dihydroneopterin triphosphate from GTP: step 1/1. Functionally, converts GTP to 7,8-dihydroneopterin triphosphate. The protein is GTP cyclohydrolase FolE2 2 of Burkholderia orbicola (strain MC0-3).